Here is a 187-residue protein sequence, read N- to C-terminus: Capsid protein (187 aa).

Over residues 151-180 (RRGSARVVRSPRRRTPSPRRRRSQSPRRRP) the composition is skewed to basic residues. The tract at residues 151–187 (RRGSARVVRSPRRRTPSPRRRRSQSPRRRPQSPASNC) is disordered. Phosphoserine; by host occurs at positions 160, 167, and 175. Repeat copies occupy residues 160–164 (SPRRR), 167–171 (SPRRR), and 175–179 (SPRRR). The segment at 160-179 (SPRRRTPSPRRRRSQSPRRR) is 3 X 5 AA repeats of S-P-R-R-R. Positions 163 to 180 (RRTPSPRRRRSQSPRRRP) match the Bipartite nuclear localization signal motif. The interval 181–187 (QSPASNC) is RNA binding.

Belongs to the orthohepadnavirus core antigen family. As to quaternary structure, homodimerizes, then multimerizes. Interacts with cytosol exposed regions of viral L glycoprotein present in the reticulum-to-Golgi compartment. Interacts with human FLNB. Phosphorylated form interacts with host importin alpha; this interaction depends on the exposure of the NLS, which itself depends upon genome maturation and/or phosphorylation of the capsid protein. Interacts with host NUP153. Phosphorylated by host SRPK1, SRPK2, and maybe protein kinase C or GAPDH. Phosphorylation is critical for pregenomic RNA packaging. Protein kinase C phosphorylation is stimulated by HBx protein and may play a role in transport of the viral genome to the nucleus at the late step during the viral replication cycle.

It localises to the virion. It is found in the host cytoplasm. Its function is as follows. Self assembles to form an icosahedral capsid. Most capsids appear to be large particles with an icosahedral symmetry of T=4 and consist of 240 copies of capsid protein, though a fraction forms smaller T=3 particles consisting of 180 capsid proteins. Entering capsids are transported along microtubules to the nucleus. Phosphorylation of the capsid is thought to induce exposure of nuclear localization signal in the C-terminal portion of the capsid protein that allows binding to the nuclear pore complex via the importin (karyopherin-) alpha and beta. Capsids are imported in intact form through the nuclear pore into the nuclear basket, where it probably binds NUP153. Only capsids that contain the mature viral genome can release the viral DNA and capsid protein into the nucleoplasm. Immature capsids get stuck in the basket. Capsids encapsulate the pre-genomic RNA and the P protein. Pre-genomic RNA is reverse-transcribed into DNA while the capsid is still in the cytoplasm. The capsid can then either be directed to the nucleus, providing more genomes for transcription, or bud through the endoplasmic reticulum to provide new virions. The sequence is that of Capsid protein from Urocitellus parryii kennicottii (ASHV).